The chain runs to 81 residues: RNA-binding protein Hfq (81 aa).

The region spanning 10-69 (DPFLNTLRREHVPVSIYLVNGIKLQGQIESFDQYVVLLRNTVTQMVYKHAISTIVPGRAV) is the Sm domain.

The protein belongs to the Hfq family. Homohexamer.

RNA chaperone that binds small regulatory RNA (sRNAs) and mRNAs to facilitate mRNA translational regulation in response to envelope stress, environmental stress and changes in metabolite concentrations. Also binds with high specificity to tRNAs. This chain is RNA-binding protein Hfq, found in Variovorax paradoxus (strain S110).